The sequence spans 656 residues: DNA ligase (656 aa).

Residues 32-36 and 81-82 each bind NAD(+); these read DAVYD and SL. The N6-AMP-lysine intermediate role is filled by K112. 3 residues coordinate NAD(+): R133, E167, and K306. Residues C400, C403, C416, and C421 each contribute to the Zn(2+) site. The region spanning 577-656 is the BRCT domain; it reads KSSSVFSDKT…ELLKRLKELD (80 aa).

Belongs to the NAD-dependent DNA ligase family. LigA subfamily. The cofactor is Mg(2+). Mn(2+) serves as cofactor.

It catalyses the reaction NAD(+) + (deoxyribonucleotide)n-3'-hydroxyl + 5'-phospho-(deoxyribonucleotide)m = (deoxyribonucleotide)n+m + AMP + beta-nicotinamide D-nucleotide.. In terms of biological role, DNA ligase that catalyzes the formation of phosphodiester linkages between 5'-phosphoryl and 3'-hydroxyl groups in double-stranded DNA using NAD as a coenzyme and as the energy source for the reaction. It is essential for DNA replication and repair of damaged DNA. The chain is DNA ligase from Helicobacter pylori (strain J99 / ATCC 700824) (Campylobacter pylori J99).